Reading from the N-terminus, the 345-residue chain is PI-PLC X domain-containing protein 1 (345 aa).

The PI-PLC X-box domain maps to 52 to 228 (QLWDVPLHHL…QVIVSYEDEA (177 aa)).

Expressed at highest levels in brain and kidney. Also detected in stomach, thymus and skeletal muscle.

It is found in the cytoplasm. The protein is PI-PLC X domain-containing protein 1 (Plcxd1) of Mus musculus (Mouse).